The following is a 230-amino-acid chain: A-type ATP synthase subunit D (230 aa).

The disordered stretch occupies residues Ala204–Asp230. A compositionally biased stretch (acidic residues) spans Glu208–Asp230.

This sequence belongs to the V-ATPase D subunit family. Has multiple subunits with at least A(3), B(3), C, D, E, F, H, I and proteolipid K(x).

The protein resides in the cell membrane. Component of the A-type ATP synthase that produces ATP from ADP in the presence of a proton gradient across the membrane. The polypeptide is A-type ATP synthase subunit D (Haloarcula marismortui (strain ATCC 43049 / DSM 3752 / JCM 8966 / VKM B-1809) (Halobacterium marismortui)).